A 242-amino-acid polypeptide reads, in one-letter code: Caffeoyl-CoA O-methyltransferase 3 (242 aa).

A substrate-binding site is contributed by Lys-16. S-adenosyl-L-methionine is bound by residues Thr-58, Glu-80, Gly-82–Val-83, Ser-88, Asp-106, and Ala-135. Asp-158 lines the substrate pocket. Residue Asp-158 participates in a divalent metal cation binding. Position 160 (Asp-160) interacts with S-adenosyl-L-methionine. 2 residues coordinate a divalent metal cation: Asp-184 and Asn-185. Substrate is bound at residue Asn-189.

It belongs to the class I-like SAM-binding methyltransferase superfamily. Cation-dependent O-methyltransferase family. CCoAMT subfamily. Mg(2+) serves as cofactor. Mostly expressed in the bottom and middle parts of the stems.

The enzyme catalyses (E)-caffeoyl-CoA + S-adenosyl-L-methionine = (E)-feruloyl-CoA + S-adenosyl-L-homocysteine + H(+). Its pathway is aromatic compound metabolism; phenylpropanoid biosynthesis. In terms of biological role, methylates caffeoyl-CoA to feruloyl-CoA and 5-hydroxyferuloyl-CoA to sinapoyl-CoA. Plays a role in the synthesis of feruloylated polysaccharides. Involved in the reinforcement of the plant cell wall. Also involved in the responding to wounding or pathogen challenge by the increased formation of cell wall-bound ferulic acid polymers. Also methylates free caffeic and 5-hydroxyferulic acids. This Nicotiana tabacum (Common tobacco) protein is Caffeoyl-CoA O-methyltransferase 3 (CCOAOMT3).